The sequence spans 266 residues: Imidazole glycerol phosphate synthase subunit HisF (266 aa).

Active-site residues include aspartate 11 and aspartate 130.

Belongs to the HisA/HisF family. In terms of assembly, heterodimer of HisH and HisF.

The protein resides in the cytoplasm. The catalysed reaction is 5-[(5-phospho-1-deoxy-D-ribulos-1-ylimino)methylamino]-1-(5-phospho-beta-D-ribosyl)imidazole-4-carboxamide + L-glutamine = D-erythro-1-(imidazol-4-yl)glycerol 3-phosphate + 5-amino-1-(5-phospho-beta-D-ribosyl)imidazole-4-carboxamide + L-glutamate + H(+). It participates in amino-acid biosynthesis; L-histidine biosynthesis; L-histidine from 5-phospho-alpha-D-ribose 1-diphosphate: step 5/9. Its function is as follows. IGPS catalyzes the conversion of PRFAR and glutamine to IGP, AICAR and glutamate. The HisF subunit catalyzes the cyclization activity that produces IGP and AICAR from PRFAR using the ammonia provided by the HisH subunit. This chain is Imidazole glycerol phosphate synthase subunit HisF, found in Delftia acidovorans (strain DSM 14801 / SPH-1).